A 2192-amino-acid chain; its full sequence is Non-reducing polyketide synthase 1 (2192 aa).

Positions 5–243 (LLLGDQTADQ…VSIPIYAPYH (239 aa)) are N-terminal acylcarrier protein transacylase domain (SAT). In terms of domain architecture, Ketosynthase family 3 (KS3) spans 374 to 806 (NDKIAIVGMS…GGNTSLLLED (433 aa)). Catalysis depends on for beta-ketoacyl synthase activity residues Cys546, His681, and His724. The malonyl-CoA:ACP transacylase (MAT) domain stretch occupies residues 905–1218 (FCFTGQGSQY…ANSMCALFLA (314 aa)). Residue Ser993 is the For acyl/malonyl transferase activity of the active site. Positions 1293–1610 (SCQKIIDEEF…RKVLNTFLPP (318 aa)) are product template (PT) domain. Positions 1295 to 1430 (QKIIDEEFSA…CTVKFEDINT (136 aa)) are N-terminal hotdog fold. Residues 1295-1605 (QKIIDEEFSA…FQKIPRKVLN (311 aa)) enclose the PKS/mFAS DH domain. The Proton acceptor; for dehydratase activity role is filled by His1327. The segment at 1458–1605 (AHVIGRGLAY…FQKIPRKVLN (148 aa)) is C-terminal hotdog fold. Residue Asp1518 is the Proton donor; for dehydratase activity of the active site. Residues 1639–1668 (TQAQPAKAVPKQVTVAAPTPKAAPKKADLK) are disordered. The Carrier 1 domain maps to 1670 to 1747 (PAGPTIITRV…EMKKFFSQYD (78 aa)). Ser1707 carries the post-translational modification O-(pantetheine 4'-phosphoryl)serine. A disordered region spans residues 1748–1788 (GEVGTPEQDDSDSDSETSGDASTPMSEVGTPMTIPSSAVSE). Acidic residues predominate over residues 1754-1764 (EQDDSDSDSET). The Carrier 2 domain occupies 1798-1875 (APASGEVSIA…DVENALDMRP (78 aa)). Ser1835 carries the post-translational modification O-(pantetheine 4'-phosphoryl)serine. The interval 1913–2164 (SKYPAATSVL…SMMKPPHVSI (252 aa)) is thioesterase (TE) domain.

Non-reducing polyketide synthase; part of the gene cluster that mediates the biosynthesis of elsinochromes, pigments consisting of at least four interconvertible tautomers (A, B, C and D) that have a core phenolic quinone to which various side chains are attached and which play an important role in fungal pathogenesis. The non-reducing polyketide synthase PKS1 was proposed to iteratively catalyze decarboxylation between acetyl-CoA and malonyl-CoA subunits for polyketide chain elongation. The released polyketide undergoes cyclization to form an aromatic ring, and proceeds via serial modification steps to produce the heptaketide back- bone of elsinochrome. As elsinochrome has a symmetrical structure, two identical heptaketides are fused to form a core 1,2-dihydrobenzo-perylene ring structure, which can then be successively modified to produce the various derivatives of elsinochrome. Some of these reactions may be cooperatively carried out, at least in part, by the products of RDT1, OXR1 and PKS1. PRF1, embedded within the elsinochrome cluster possibly functions to stabilize some of the biosynthetic enzymes required for elsinochrome production. As prefoldin is a hexamer containing 2 a and 4 b subunits, additional prefoldin subunits, whose coding genes may not immediately link to the elsinochrome biosynthetic gene cluster, are required to fulfill the chaperone function. In addition, no methyltransferase-coding gene exists within the biosynthetic gene cluster, even though elsinochrome has four methyl groups at positions C3, C7, C8 and C12. Apparently, the identified gene cluster does not contain the entire entourage of genes responsible for elsinochrome biosynthesis. Once elsinochrome is synthesized, it must be exported outside the fungal cells, which is probably accomplished by the ECT1 transporter, to avoid toxicity. The protein is Non-reducing polyketide synthase 1 of Elsinoe fawcettii (Citrus scab fungus).